The primary structure comprises 220 residues: Adenylate kinase (220 aa).

10-15 (GAGKGT) is a binding site for ATP. The segment at 30–59 (STGDMLRAAVKAGSPLGVEAKGYMDAGKLV) is NMP. AMP contacts are provided by residues Thr-31, Arg-36, 57–59 (KLV), 85–88 (GFPR), and Gln-92. The interval 122–159 (GRRTHPASGRTYHVKFNPPKVEGKDDVTGEPLIQRDDD) is LID. ATP contacts are provided by residues Arg-123 and 132 to 133 (TY). The AMP site is built by Arg-156 and Arg-167. ATP is bound at residue Gly-206.

The protein belongs to the adenylate kinase family. As to quaternary structure, monomer.

Its subcellular location is the cytoplasm. The catalysed reaction is AMP + ATP = 2 ADP. The protein operates within purine metabolism; AMP biosynthesis via salvage pathway; AMP from ADP: step 1/1. Its function is as follows. Catalyzes the reversible transfer of the terminal phosphate group between ATP and AMP. Plays an important role in cellular energy homeostasis and in adenine nucleotide metabolism. This chain is Adenylate kinase, found in Burkholderia ambifaria (strain ATCC BAA-244 / DSM 16087 / CCUG 44356 / LMG 19182 / AMMD) (Burkholderia cepacia (strain AMMD)).